The sequence spans 296 residues: ADP-dependent (S)-NAD(P)H-hydrate dehydratase (296 aa).

Residues 18–292 enclose the YjeF C-terminal domain; it reads TALRFPHVFK…PAARWLRNRI (275 aa). Residues Ala53, Gly113, and His165 each contribute to the (6S)-NADPHX site. Residues 202-206 and Gly231 contribute to the AMP site; that span reads KGHKT. Asp232 lines the (6S)-NADPHX pocket.

The protein belongs to the NnrD/CARKD family. Homotetramer. Mg(2+) is required as a cofactor.

The enzyme catalyses (6S)-NADHX + ADP = AMP + phosphate + NADH + H(+). It carries out the reaction (6S)-NADPHX + ADP = AMP + phosphate + NADPH + H(+). Its function is as follows. Catalyzes the dehydration of the S-form of NAD(P)HX at the expense of ADP, which is converted to AMP. Together with NAD(P)HX epimerase, which catalyzes the epimerization of the S- and R-forms, the enzyme allows the repair of both epimers of NAD(P)HX, a damaged form of NAD(P)H that is a result of enzymatic or heat-dependent hydration. This Neisseria meningitidis serogroup B (strain ATCC BAA-335 / MC58) protein is ADP-dependent (S)-NAD(P)H-hydrate dehydratase.